Here is an 854-residue protein sequence, read N- to C-terminus: Nucleolar MIF4G domain-containing protein 1 homolog (854 aa).

Disordered stretches follow at residues 1 to 38, 55 to 105, 120 to 161, and 217 to 306; these read MAKIKKKEAKAKPLTRKEQRKQKSEFKKQNKRLYFAGK, QSQL…DAEV, PLGK…KQRI, and RKWE…RDAE. The span at 15–28 shows a compositional bias: basic and acidic residues; that stretch reads TRKEQRKQKSEFKK. The span at 60–71 shows a compositional bias: basic residues; it reads KNKKKKRSKKPK. Positions 88-105 are enriched in acidic residues; the sequence is IDSDDDESIDSDFSDAEV. 2 stretches are compositionally biased toward basic and acidic residues: residues 135-156 and 217-238; these read RQDEEAVRRKELRQQKELESKS and RKWEEKQERKKKLKEQQEKEEA. A compositionally biased stretch (acidic residues) spans 242–289; the sequence is SDEEEDKEDRDEPMDNFSEDDSGSEGEDDDEDLTGEEEQSEEDSEQEE. Residues 290–306 show a composition bias toward basic and acidic residues; that stretch reads NAPKIKEDIYGRKRDAE. The MIF4G domain occupies 352-553; that stretch reads LKQCKGLLNR…DILNAVKNNN (202 aa). The region spanning 650–764 is the MI domain; the sequence is AERRNIFCII…QLSVLKVVDF (115 aa).

The protein belongs to the CWC22 family.

It localises to the nucleus. Its subcellular location is the nucleolus. This is Nucleolar MIF4G domain-containing protein 1 homolog from Drosophila melanogaster (Fruit fly).